A 162-amino-acid polypeptide reads, in one-letter code: Cadmium metallothionein (162 aa).

A propeptide spanning residues Met-1–Asp-2 is cleaved from the precursor.

Its function is as follows. The metallothioneins are involved in the cellular sequestration of toxic metal ions. The sequence is that of Cadmium metallothionein (MTT1) from Tetrahymena thermophila.